The sequence spans 151 residues: Probable cGMP 3',5'-cyclic phosphodiesterase subunit delta (151 aa).

This sequence belongs to the PDE6D/unc-119 family. In terms of assembly, interacts with Pde6.

The protein resides in the nucleus. Its subcellular location is the cytoplasm. This is Probable cGMP 3',5'-cyclic phosphodiesterase subunit delta from Drosophila grimshawi (Hawaiian fruit fly).